A 1007-amino-acid chain; its full sequence is Protocadherin alpha-C2 (1007 aa).

Positions 1-42 (MEQAGTRPAATEHPRLRRPMPWLLLLPLLLLLLLLLPGPAAS) are cleaved as a signal peptide. Cadherin domains are found at residues 43 to 148 (QLRY…SPRF), 149 to 257 (PRPN…SPAF), 258 to 365 (DQST…APEV), 374 to 469 (VPEN…PPSF), and 470 to 579 (LEDS…APHI). The Extracellular portion of the chain corresponds to 43 to 708 (QLRYSVPEEQ…RTYSEITLYL (666 aa)). Residues Asn280 and Asn436 are each glycosylated (N-linked (GlcNAc...) asparagine). 2 N-linked (GlcNAc...) asparagine glycosylation sites follow: Asn586 and Asn657. The Cadherin 6 domain occupies 594 to 691 (VPRTAPAGYL…DRVSKILPDT (98 aa)). The helical transmembrane segment at 709-729 (IIALSTVSFIFLLTIIILSII) threads the bilayer. Residues 730–1007 (KCYRYTAYGT…GNSTTDNSDQ (278 aa)) lie on the Cytoplasmic side of the membrane. PXXP repeat units lie at residues 856–859 (PRQP), 889–892 (PGGP), 930–933 (PGNP), and 948–951 (PGSP). A 4 X 4 AA repeats of P-X-X-P region spans residues 856–951 (PRQPNPDWRY…PDKFIIPGSP (96 aa)). A disordered region spans residues 885–1007 (LRAGPGGPDQ…GNSTTDNSDQ (123 aa)). The span at 966–980 (DKSDFITFGKKEETK) shows a compositional bias: basic and acidic residues.

It localises to the cell membrane. Functionally, potential calcium-dependent cell-adhesion protein. May be involved in the establishment and maintenance of specific neuronal connections in the brain. This Homo sapiens (Human) protein is Protocadherin alpha-C2 (PCDHAC2).